Reading from the N-terminus, the 343-residue chain is Outer envelope pore protein 37, chloroplastic (343 aa).

2 stretches are compositionally biased toward polar residues: residues 1-11 and 23-43; these read MADPSSQNPNL and THQI…PCST. The segment at 1–43 is disordered; that stretch reads MADPSSQNPNLATPPPPSSPSPTHQIQSGTSELSPPSRPPCST. Residues 1-73 constitute a chloroplast transit peptide; that stretch reads MADPSSQNPN…DSLLFLNKVS (73 aa). The Cytoplasmic segment spans residues 74–76; sequence CKL. The beta stranded transmembrane segment at 77 to 86 threads the bilayer; the sequence is FDNLAKLKLS. The Chloroplast intermembrane portion of the chain corresponds to 87–103; sequence FQNNSQREISQPQVSFT. The beta stranded transmembrane segment at 104–113 threads the bilayer; the sequence is SKHVSVLYDV. Over 114 to 129 the chain is Cytoplasmic; sequence EEKNTFIKSTLDVHPR. A beta stranded membrane pass occupies residues 130–137; sequence LQLRALHN. Residues 138-154 lie on the Chloroplast intermembrane side of the membrane; sequence VKAQQGEVAMEANLTEP. A beta stranded membrane pass occupies residues 155–164; that stretch reads GYSLELSSPV. Topologically, residues 165–169 are cytoplasmic; sequence PIGYP. The chain crosses the membrane as a beta stranded span at residues 170–178; the sequence is RATLKFPLG. Topologically, residues 179–219 are chloroplast intermembrane; the sequence is EISLQEKDEEEEEKQKRTLSVNGILKRQVMNGVCTALYTDE. Residues 220–228 traverse the membrane as a beta stranded segment; that stretch reads ELRLRYAYK. Topologically, residues 229–230 are cytoplasmic; it reads DD. The chain crosses the membrane as a beta stranded span at residues 231–240; it reads ALSFIPSISL. Pro241 is a topological domain (chloroplast intermembrane). A beta stranded membrane pass occupies residues 242–250; the sequence is SNAASFAFK. The Cytoplasmic segment spans residues 251 to 257; it reads RRFSPSD. Residues 258-267 traverse the membrane as a beta stranded segment; that stretch reads KLSYWYNFDS. The Chloroplast intermembrane portion of the chain corresponds to 268–269; that stretch reads NM. A beta stranded membrane pass occupies residues 270-279; that stretch reads WSAVYKRTYG. Residues 280 to 286 lie on the Cytoplasmic side of the membrane; that stretch reads KDYKLKA. Residues 287 to 296 form a beta stranded membrane-spanning segment; the sequence is GYDSDVRLGW. Topologically, residues 297 to 316 are chloroplast intermembrane; it reads ASLWVGDEAGKVKTTPMKMK. Residues 317 to 326 traverse the membrane as a beta stranded segment; that stretch reads VQFMLQVPQD. Over 327 to 343 the chain is Cytoplasmic; the sequence is DIKSSVLMFRVKKRWDI.

It belongs to the plastid outer envelope porin OEP37 (TC 1.B.47) family. As to quaternary structure, forms an hourglass-shaped multimeric complex. Ubiquitously expressed at low levels. Mostly present in cotyledons, and accumulates in seedlings and embryos.

Its subcellular location is the plastid. The protein localises to the chloroplast outer membrane. In terms of biological role, voltage-dependent peptide-sensitive high conductance rectifying cation channel with a strong affinity for TIC32 that is imported into the chloroplast. Conductance is pH-dependent decreasing with decreasing pH values. In Arabidopsis thaliana (Mouse-ear cress), this protein is Outer envelope pore protein 37, chloroplastic (OEP37).